Consider the following 703-residue polypeptide: Polyribonucleotide nucleotidyltransferase (703 aa).

Residues Asp484 and Asp490 each coordinate Mg(2+). The region spanning 551-610 (PTVTTLRVLPEKISVIIGPAGKNIKKIIEETGVKIDLDPTGLVKIYATSKIAAEKAIDMI) is the KH domain. An S1 motif domain is found at 620-688 (GEVYLGKVTR…DQGRIKVSLK (69 aa)).

The protein belongs to the polyribonucleotide nucleotidyltransferase family. Mg(2+) is required as a cofactor.

The protein localises to the cytoplasm. The catalysed reaction is RNA(n+1) + phosphate = RNA(n) + a ribonucleoside 5'-diphosphate. In terms of biological role, involved in mRNA degradation. Catalyzes the phosphorolysis of single-stranded polyribonucleotides processively in the 3'- to 5'-direction. In Sulfurihydrogenibium sp. (strain YO3AOP1), this protein is Polyribonucleotide nucleotidyltransferase.